A 357-amino-acid chain; its full sequence is MAAPAKGENLSLVVHGPGDIRLENYPIPELGPNDVLLKMHSVGICGSDVHYWEHGRIGDFVVKKPMVLGHEAAGTVTKVGPMVKHLKPGDRVAIEPGVPREIDEFCKIGRYNLTPSIFFCATPPDDGNLCRFYKHSADFCYKLPDSVTFEEGALIEPLSVGIYACRRGSVSLGNKVLVCGAGPIGIVTLLVAKAMGASQVVVIDLSASRLAKAKEVGADFTIQVAKETPHDIAKKVESVLGSKPEVTIECTGAESSVQTGIYATHSGGTLVVVGMGPEMINLPLVHAAVREVDIKGVFRYCNTWPMAVSMLASKTLNVKPLVTHRFPLEKAVEAFETAKKGLGLKVMIKCDPNDQNP.

A2 bears the N-acetylalanine mark. Zn(2+) is bound at residue C45. A substrate-binding site is contributed by Y51. Zn(2+) is bound by residues H70, E71, and E156. E156 contributes to the substrate binding site. Phosphoserine is present on S169. NAD(+) is bound by residues I184, D204, R209, V273–M275, and V297–R299. R299 and Y300 together coordinate substrate.

This sequence belongs to the zinc-containing alcohol dehydrogenase family. As to quaternary structure, homotetramer; dimer of dimers. Requires Zn(2+) as cofactor. As to expression, expressed in liver and testis.

It is found in the mitochondrion membrane. The protein localises to the cell projection. The protein resides in the cilium. Its subcellular location is the flagellum. The enzyme catalyses keto-D-fructose + NADH + H(+) = D-sorbitol + NAD(+). It carries out the reaction xylitol + NAD(+) = D-xylulose + NADH + H(+). It catalyses the reaction L-iditol + NAD(+) = keto-L-sorbose + NADH + H(+). Functionally, polyol dehydrogenase that catalyzes the reversible NAD(+)-dependent oxidation of various sugar alcohols. Is active with D-sorbitol (D-glucitol) leading to the C2-oxidized product D-fructose. Is a key enzyme in the polyol pathway that interconverts glucose and fructose via sorbitol, which constitutes an important alternate route for glucose metabolism. May play a role in sperm motility by using sorbitol as an alternative energy source for sperm motility. The sequence is that of Sorbitol dehydrogenase (Sord) from Rattus norvegicus (Rat).